Here is a 424-residue protein sequence, read N- to C-terminus: CinA-like protein (424 aa).

Belongs to the CinA family.

The chain is CinA-like protein from Nostoc sp. (strain PCC 7120 / SAG 25.82 / UTEX 2576).